The sequence spans 89 residues: Small ribosomal subunit protein uS15 (89 aa).

This sequence belongs to the universal ribosomal protein uS15 family. As to quaternary structure, part of the 30S ribosomal subunit. Forms a bridge to the 50S subunit in the 70S ribosome, contacting the 23S rRNA.

One of the primary rRNA binding proteins, it binds directly to 16S rRNA where it helps nucleate assembly of the platform of the 30S subunit by binding and bridging several RNA helices of the 16S rRNA. Its function is as follows. Forms an intersubunit bridge (bridge B4) with the 23S rRNA of the 50S subunit in the ribosome. The sequence is that of Small ribosomal subunit protein uS15 from Beijerinckia indica subsp. indica (strain ATCC 9039 / DSM 1715 / NCIMB 8712).